Reading from the N-terminus, the 104-residue chain is Large ribosomal subunit protein bL21 (104 aa).

This sequence belongs to the bacterial ribosomal protein bL21 family. In terms of assembly, part of the 50S ribosomal subunit. Contacts protein L20.

Functionally, this protein binds to 23S rRNA in the presence of protein L20. This Gluconobacter oxydans (strain 621H) (Gluconobacter suboxydans) protein is Large ribosomal subunit protein bL21.